The following is a 260-amino-acid chain: 5-oxoprolinase subunit A (260 aa).

It belongs to the LamB/PxpA family. Forms a complex composed of PxpA, PxpB and PxpC.

The catalysed reaction is 5-oxo-L-proline + ATP + 2 H2O = L-glutamate + ADP + phosphate + H(+). Functionally, catalyzes the cleavage of 5-oxoproline to form L-glutamate coupled to the hydrolysis of ATP to ADP and inorganic phosphate. The polypeptide is 5-oxoprolinase subunit A (Methylococcus capsulatus (strain ATCC 33009 / NCIMB 11132 / Bath)).